Consider the following 438-residue polypeptide: GDP-mannose 6-dehydrogenase (438 aa).

NAD(+)-binding residues include Y10, V11, D30, K35, T86, and T124. Positions 161, 210, 214, 217, 225, 256, 257, 259, 262, and 265 each coordinate GDP-alpha-D-mannuronate. C268 is a catalytic residue. An NAD(+)-binding site is contributed by K271. Residue K324 participates in GDP-alpha-D-mannuronate binding. R331 provides a ligand contact to NAD(+).

This sequence belongs to the UDP-glucose/GDP-mannose dehydrogenase family.

The catalysed reaction is GDP-alpha-D-mannose + 2 NAD(+) + H2O = GDP-alpha-D-mannuronate + 2 NADH + 3 H(+). It participates in glycan biosynthesis; alginate biosynthesis. Functionally, catalyzes the oxidation of guanosine diphospho-D-mannose (GDP-D-mannose) to GDP-D-mannuronic acid, a precursor for alginate polymerization. The alginate layer causes a mucoid phenotype and provides a protective barrier against host immune defenses and antibiotics. The sequence is that of GDP-mannose 6-dehydrogenase (algD) from Pseudomonas syringae pv. syringae.